Reading from the N-terminus, the 1265-residue chain is Methionine synthase (1265 aa).

Residues R19–V338 form the Hcy-binding domain. Positions 260, 323, and 324 each coordinate Zn(2+). The region spanning F371–E632 is the Pterin-binding domain. (6S)-5,6,7,8-tetrahydrofolate-binding positions include G382–R384, D449, N470, D537, N579, R585, and R591. One can recognise a B12-binding N-terminal domain in the interval Q662–R759. Residues E709, G782–D786, H785, S830, T834, and A886 each bind methylcob(III)alamin. The B12-binding domain occupies Q772–E907. Residues S923 to D1265 form the AdoMet activation domain. S-adenosyl-L-methionine-binding positions include D974, R1172, and Y1227–F1228. T1264 carries the post-translational modification Phosphothreonine.

This sequence belongs to the vitamin-B12 dependent methionine synthase family. Monomer. Dimer. Forms a multiprotein complex with MMACHC, MMADHC and MTRR. Requires methylcob(III)alamin as cofactor. Zn(2+) is required as a cofactor. Widely expressed. Expressed at the highest levels in pancreas, heart, brain, skeletal muscle and placenta. Expressed at lower levels in lung, liver and kidney.

Its subcellular location is the cytoplasm. The catalysed reaction is (6S)-5-methyl-5,6,7,8-tetrahydrofolate + L-homocysteine = (6S)-5,6,7,8-tetrahydrofolate + L-methionine. Its pathway is amino-acid biosynthesis; L-methionine biosynthesis via de novo pathway; L-methionine from L-homocysteine (MetH route): step 1/1. In terms of biological role, catalyzes the transfer of a methyl group from methylcob(III)alamin (MeCbl) to homocysteine, yielding enzyme-bound cob(I)alamin and methionine in the cytosol. MeCbl is an active form of cobalamin (vitamin B12) used as a cofactor for methionine biosynthesis. Cob(I)alamin form is regenerated to MeCbl by a transfer of a methyl group from 5-methyltetrahydrofolate. The processing of cobalamin in the cytosol occurs in a multiprotein complex composed of at least MMACHC, MMADHC, MTRR (methionine synthase reductase) and MTR which may contribute to shuttle safely and efficiently cobalamin towards MTR in order to produce methionine. The protein is Methionine synthase of Homo sapiens (Human).